A 931-amino-acid polypeptide reads, in one-letter code: 3'-5' exonuclease DinG (931 aa).

An Exonuclease domain is found at 7–162 (VVIDVETTGN…DSDAEVTGLI (156 aa)). The Helicase ATP-binding domain maps to 250-510 (LSELMPGYEK…KKMRQLFQRN (261 aa)). 284–291 (APPGIGKT) lines the ATP pocket. The DEAH box signature appears at 462–465 (DEAH). In terms of domain architecture, Helicase C-terminal spans 741–897 (DTARYIELMA…TIIILDRRIK (157 aa)).

Belongs to the helicase family. DinG subfamily. Type 2 sub-subfamily.

The protein localises to the cytoplasm. In terms of biological role, 3'-5' exonuclease. This Bacillus subtilis (strain 168) protein is 3'-5' exonuclease DinG.